The chain runs to 394 residues: Probable cytosolic iron-sulfur protein assembly protein 1 (394 aa).

7 WD repeats span residues 10–49, 56–108, 144–184, 191–230, 237–284, 313–352, and 359–394; these read AHND…NFPL, AHKR…EQDS, GHEN…EEFE, DHQH…DDWS, GHGG…TEQI, IHKY…KWEI, and AHGV…IWEP.

The protein belongs to the WD repeat CIA1 family. Interacts with NAR1.

The protein resides in the cytoplasm. It is found in the nucleus. Its function is as follows. Essential component of the cytosolic iron-sulfur (Fe/S) protein assembly machinery. Required for the maturation of extramitochondrial Fe/S proteins. The sequence is that of Probable cytosolic iron-sulfur protein assembly protein 1 from Debaryomyces hansenii (strain ATCC 36239 / CBS 767 / BCRC 21394 / JCM 1990 / NBRC 0083 / IGC 2968) (Yeast).